We begin with the raw amino-acid sequence, 116 residues long: Distal membrane-arm assembly complex protein 1 (116 aa).

A disordered region spans residues Met1–Ala39. Residues Thr14 to Ala24 are compositionally biased toward low complexity. A run of 2 helical transmembrane segments spans residues Val52 to Ala69 and Trp82 to Val104.

Interacts with incompletely assembled mitochondrial NADH:ubiquinone oxidoreductase complex (complex I).

It localises to the mitochondrion inner membrane. In terms of biological role, required for the assembly of the mitochondrial NADH:ubiquinone oxidoreductase complex (complex I). Involved in the assembly of the distal region of complex I. In Homo sapiens (Human), this protein is Distal membrane-arm assembly complex protein 1.